We begin with the raw amino-acid sequence, 349 residues long: S-adenosylmethionine:tRNA ribosyltransferase-isomerase (349 aa).

Belongs to the QueA family. As to quaternary structure, monomer.

The protein localises to the cytoplasm. The catalysed reaction is 7-aminomethyl-7-carbaguanosine(34) in tRNA + S-adenosyl-L-methionine = epoxyqueuosine(34) in tRNA + adenine + L-methionine + 2 H(+). It participates in tRNA modification; tRNA-queuosine biosynthesis. Functionally, transfers and isomerizes the ribose moiety from AdoMet to the 7-aminomethyl group of 7-deazaguanine (preQ1-tRNA) to give epoxyqueuosine (oQ-tRNA). This chain is S-adenosylmethionine:tRNA ribosyltransferase-isomerase, found in Ruegeria pomeroyi (strain ATCC 700808 / DSM 15171 / DSS-3) (Silicibacter pomeroyi).